Here is a 415-residue protein sequence, read N- to C-terminus: Gamma-glutamyl phosphate reductase (415 aa).

Belongs to the gamma-glutamyl phosphate reductase family.

It localises to the cytoplasm. It catalyses the reaction L-glutamate 5-semialdehyde + phosphate + NADP(+) = L-glutamyl 5-phosphate + NADPH + H(+). Its pathway is amino-acid biosynthesis; L-proline biosynthesis; L-glutamate 5-semialdehyde from L-glutamate: step 2/2. Its function is as follows. Catalyzes the NADPH-dependent reduction of L-glutamate 5-phosphate into L-glutamate 5-semialdehyde and phosphate. The product spontaneously undergoes cyclization to form 1-pyrroline-5-carboxylate. The chain is Gamma-glutamyl phosphate reductase from Clostridium perfringens (strain SM101 / Type A).